The primary structure comprises 121 residues: Small ribosomal subunit protein uS13 (121 aa).

The tract at residues 89–121 is disordered; sequence MRHRRGLPVRGQNTKNNARTRKGKKVSIAGKKK. The segment covering 106 to 121 has biased composition (basic residues); that stretch reads ARTRKGKKVSIAGKKK.

The protein belongs to the universal ribosomal protein uS13 family. In terms of assembly, part of the 30S ribosomal subunit. Forms a loose heterodimer with protein S19. Forms two bridges to the 50S subunit in the 70S ribosome.

In terms of biological role, located at the top of the head of the 30S subunit, it contacts several helices of the 16S rRNA. In the 70S ribosome it contacts the 23S rRNA (bridge B1a) and protein L5 of the 50S subunit (bridge B1b), connecting the 2 subunits; these bridges are implicated in subunit movement. Contacts the tRNAs in the A and P-sites. The sequence is that of Small ribosomal subunit protein uS13 from Latilactobacillus sakei subsp. sakei (strain 23K) (Lactobacillus sakei subsp. sakei).